The primary structure comprises 102 residues: NADH-quinone oxidoreductase subunit K 1 (102 aa).

3 consecutive transmembrane segments (helical) span residues 5–25 (LYEV…CVVA), 30–50 (VIMM…TFVG), and 62–82 (VFSL…LAMV).

Belongs to the complex I subunit 4L family. NDH-1 is composed of 14 different subunits. Subunits NuoA, H, J, K, L, M, N constitute the membrane sector of the complex.

The protein resides in the cell inner membrane. The catalysed reaction is a quinone + NADH + 5 H(+)(in) = a quinol + NAD(+) + 4 H(+)(out). Functionally, NDH-1 shuttles electrons from NADH, via FMN and iron-sulfur (Fe-S) centers, to quinones in the respiratory chain. The immediate electron acceptor for the enzyme in this species is believed to be ubiquinone. Couples the redox reaction to proton translocation (for every two electrons transferred, four hydrogen ions are translocated across the cytoplasmic membrane), and thus conserves the redox energy in a proton gradient. This is NADH-quinone oxidoreductase subunit K 1 from Geobacter sp. (strain M21).